The chain runs to 538 residues: CTP synthase (538 aa).

The tract at residues 1 to 266 (MRTKYIFITG…DQKIVDLLNI (266 aa)) is amidoligase domain. Position 14 (Ser-14) interacts with CTP. Ser-14 contacts UTP. ATP-binding positions include 15 to 20 (SLGKGL) and Asp-72. The Mg(2+) site is built by Asp-72 and Glu-140. CTP is bound by residues 147-149 (DIE), 187-192 (KTKPTQ), and Lys-223. Residues 187–192 (KTKPTQ) and Lys-223 contribute to the UTP site. 239–241 (KDV) serves as a coordination point for ATP. A Glutamine amidotransferase type-1 domain is found at 291 to 533 (NIAIVGKYVN…IEAALRYRKK (243 aa)). Residue Gly-353 participates in L-glutamine binding. Catalysis depends on Cys-380, which acts as the Nucleophile; for glutamine hydrolysis. L-glutamine contacts are provided by residues 381–384 (LGMQ), Glu-404, and Arg-461. Active-site residues include His-506 and Glu-508.

The protein belongs to the CTP synthase family. As to quaternary structure, homotetramer.

The enzyme catalyses UTP + L-glutamine + ATP + H2O = CTP + L-glutamate + ADP + phosphate + 2 H(+). It catalyses the reaction L-glutamine + H2O = L-glutamate + NH4(+). It carries out the reaction UTP + NH4(+) + ATP = CTP + ADP + phosphate + 2 H(+). It functions in the pathway pyrimidine metabolism; CTP biosynthesis via de novo pathway; CTP from UDP: step 2/2. Its activity is regulated as follows. Allosterically activated by GTP, when glutamine is the substrate; GTP has no effect on the reaction when ammonia is the substrate. The allosteric effector GTP functions by stabilizing the protein conformation that binds the tetrahedral intermediate(s) formed during glutamine hydrolysis. Inhibited by the product CTP, via allosteric rather than competitive inhibition. Catalyzes the ATP-dependent amination of UTP to CTP with either L-glutamine or ammonia as the source of nitrogen. Regulates intracellular CTP levels through interactions with the four ribonucleotide triphosphates. In Syntrophus aciditrophicus (strain SB), this protein is CTP synthase.